Consider the following 222-residue polypeptide: Endonuclease V (222 aa).

Residues Asp43 and Asp109 each coordinate Mg(2+).

The protein belongs to the endonuclease V family. Mg(2+) is required as a cofactor.

It is found in the cytoplasm. The enzyme catalyses Endonucleolytic cleavage at apurinic or apyrimidinic sites to products with a 5'-phosphate.. Functionally, DNA repair enzyme involved in the repair of deaminated bases. Selectively cleaves double-stranded DNA at the second phosphodiester bond 3' to a deoxyinosine leaving behind the intact lesion on the nicked DNA. This chain is Endonuclease V, found in Roseiflexus sp. (strain RS-1).